The sequence spans 200 residues: MSFSPLIRQLIDALRTLPGVGQKTAQRMALQLLERDRSGGTRLAQALSQAMTGVGHCRQCRTLTEEELCPQCADPRRDDTLLCVVEGPMDVYAVEQTGYRGRYFVLKGHLSPLDGLGPEAIGIPQLVARIEEQGTFTEVILATNPTVEGEATAHYIAQLLTNKGLITSRIAHGVPLGGELELVDGGTLAHSFAGRKPIAL.

A C4-type zinc finger spans residues 57–72; sequence CRQCRTLTEEELCPQC. The Toprim domain occupies 80 to 175; that stretch reads TLLCVVEGPM…ITSRIAHGVP (96 aa).

It belongs to the RecR family.

May play a role in DNA repair. It seems to be involved in an RecBC-independent recombinational process of DNA repair. It may act with RecF and RecO. The polypeptide is Recombination protein RecR (Pseudomonas fluorescens (strain SBW25)).